The primary structure comprises 405 residues: Cytochrome P450 130 (405 aa).

Residues Asp93 and His97 each contribute to the substrate site. Heme-binding residues include Arg101, Gly243, Arg295, Tyr318, Ser348, His352, and Cys354.

The protein belongs to the cytochrome P450 family. Homodimer. The cofactor is heme.

This chain is Cytochrome P450 130 (cyp130), found in Mycobacterium tuberculosis (strain CDC 1551 / Oshkosh).